A 287-amino-acid polypeptide reads, in one-letter code: 4-diphosphocytidyl-2-C-methyl-D-erythritol kinase (287 aa).

Residue Lys14 is part of the active site. 96-106 (PWGAGLGGGSS) provides a ligand contact to ATP. The active site involves Asp138.

It belongs to the GHMP kinase family. IspE subfamily.

The catalysed reaction is 4-CDP-2-C-methyl-D-erythritol + ATP = 4-CDP-2-C-methyl-D-erythritol 2-phosphate + ADP + H(+). Its pathway is isoprenoid biosynthesis; isopentenyl diphosphate biosynthesis via DXP pathway; isopentenyl diphosphate from 1-deoxy-D-xylulose 5-phosphate: step 3/6. Catalyzes the phosphorylation of the position 2 hydroxy group of 4-diphosphocytidyl-2C-methyl-D-erythritol. The chain is 4-diphosphocytidyl-2-C-methyl-D-erythritol kinase from Methylibium petroleiphilum (strain ATCC BAA-1232 / LMG 22953 / PM1).